A 2529-amino-acid polypeptide reads, in one-letter code: MSYPFGKEETATEEELFEFFCECLRRGDWELAQACVPQLHRGQGEIPQKVEDILQALVQCPILLRCGPDINPQRLAWLWLLVLEKWLAPEKKLLSTAIRRKLEFLFLSEDLQGDIPETILKELFETLAQGPAGSIPDRRTPQLSPEAVSVLWNLLKQAPRPAQALLELLLEDHHSASLCPSPLQKSLLDLIREALQTLRDPASQPPGVADAVCGALQALCCKAELPESEWRVLCEELLETCRTEDSPLQEERLLGCLLHKAGRNLLSLYGHTYAEKVAERPPKATLSGKDHPDPERAMLALFSTPDPAHAWKMAFFYCLSNNKHFLEQILVTALTLLKEEDFPSLGYLLDREFRPLSHLLVLLGWTHCQSLESAKRLLQTLYRTQDQGHDELLRDACEGLWAHLEVLEWCVQQSSNLIPKRELLCHLHGGDSHSVLYSLHHLTNLPALNEEEVLKLLQKEPTKDLQGEHETHDASVPEHLSQCQSLTLYQGFCAMKYAVYALCVNSHQHSQCQDCRDSASEDLALVEPGSDSLPSPGASHLFPTYLARCRQYLHSIPASLCLEILENIFSLLLITSADLHPEPHLPEDYAEDEDIEGKGPLGLRSPSESPQHIAATERRSERASMGPRNPAHTVPGCPKAEPKDSSPGPHKHSFLDLKHFTSGVNGFLADEFAMGAFLSLLQEQLTEISSHRTPEETKLPEDQSCSAARDGLQSRLHRFSKVLSEAQWRYKVVTSNQGSEEQPSRRYRPIATRHSSLRRGRRTRRTRADGRERGSNPSLEGTSSELSTSTSEGSLSAVSGQVESDSRFQTQPQSSIIPMMFSTPESLLASCILRGNFAEAHQVVLMFNLKSSPIAGELMFVERYQEVIQELARVEHKIENQNSDGGNNTIRRTGSGRSTLQAIGSAAAAGMVFYSISDVTEKLLSPSEDPIPTLQEDFWINATPMETTTPLREVLEDLSPPAMAAFDLACCQCQLWKTCKQLLETAERRLSSSLESRGRRLDQVVLNPDGMRGFPFVLQQISKILSYPLMQTGLAKSETLEERGGGAPRSSISELLQMCWPSLTEDCVASHTSLSQQLEQALQSLREALALPESKSTPLSCLVEQAAQKAPEAEAHPVHIQSQLLQKTLGRQTPAGHRQTDYVGAFFSYCSSLAAVLLRSLSSDPDHVEVRVGNPFVLLQQSSSQLVSHLLLERQVPPDRLAALLAQEHLNLSVPQVIVSCCCEPLTLCLSRQSQQASSLLTHLGMLAREHASHLLDGLPLSTLGSPRPSENPSAERKSHSSPKDSLPAFTASALAFLKSRSKILAMVACLRTSRGTKVSKPGLSWKELRGRREAPLTAEKVAQECEHLLEQFPVFEAALLANWEPLQQASEPKQSLAASLCGQANLSTVLLGLHSSLALDILTEAFEGALVARDWPRALQLIDVYGQDLDDLSIVQDSVLTCAAVCDKEGWQYLFPVKDASLRSQLALRFVDKWPLESCLEILAYCVSDMAVQEELKSELQRKLMELRVYQKILGLQDPPVWCDWQTLRSCCAEDPSAVMDMMLDSQEYELCEEWGRLYPIPREHLVSLHHKHLLHLLERSEHDKALQLLQRIPDPTMCLEVTERSLDQHPSLATSHFLANYLTSHFYGELTTDRHREIQALYMGSKVLLTLPEQHRASYARLSSSPLLMLEQLLMNMKVDWATTAVQTLHQLLAGQDIGFTLDEVDSLLSRYAGKALDLPYPLREKRSDSMIHLQEPVHQASDSETLSRSSSAEFSAAAAPGSALVRSPSPKERAFPQTQPPVEFVPPETPPARDQWVPDETESVCMVCCREHFTMFNRRHHCRRCGRLVCGSCSTKKMVVEGFRENPTRVCDQCYSYYNKDTPEESPCQSEVPDSAKNESPPYSAVVRVPKATEVEWILSLSEEENELVRSEFYYEQAPSASLCIAILNLHRDSIACGHQLIEHCCRLSRGLTNPEVDAGLLIDIMKQLLFSAKMMFVKAGQSQDLALCDSYISKVDVLHLLVAAAYRHVPSLDQILQPAAVTRLRNQLLEAEYYQLGVEVSTKTGLDSTGAWHAWGMACLKAGNLTVAREKFTRCLKPPLDLNQLSHGSRLVQDVVEYLESTVRPLVSLQDDDYFATLRELEATLRTQSLLLEAIPEGKIMNNTYYQECLFYLHNYSTNLAIISFYMRHNCLREALLHLLNKESPPEVFIEGIFQPSYKSGKLHTLENLLESIDPTLESWGAHLIAACQHLQKNSYYHILYELQQFMKDQVRAAMTCIRFFSHKAKSYTELGEKLSWLLKAKDHLKIYLQETSRSSGRKKATFFRKKMTAADVSRHMNTLQLQMEVTRFLHRCESAGTSQVTTLPLPTLFGNNHMKMEVACKVMLGGKNVEDGFGIAFRVLQDFQLDAAATYCRAARQLVEREKYGEIRQLLKCVSESGMAAKSDGDTILLNCLEAFKRIPPQELEGLIQAIHSDDNKVRAYLTCCKLRSAYLIAVKQEHSQAAALVQQVQQAAKSSGDSVVQDICAQWLLTSHSRGAHGSGSRK.

3 disordered regions span residues 584–650 (HLPE…PGPH), 689–709 (SSHR…SAAR), and 733–810 (VTSN…RFQT). Phosphoserine occurs at positions 605 and 609. The segment covering 689–701 (SSHRTPEETKLPE) has biased composition (basic and acidic residues). Over residues 755–765 (SSLRRGRRTRR) the composition is skewed to basic residues. Residues 778–796 (SLEGTSSELSTSTSEGSLS) show a composition bias toward low complexity. Ser791 carries the phosphoserine modification. Positions 797-810 (AVSGQVESDSRFQT) are enriched in polar residues. Residues 859-884 (MFVERYQEVIQELARVEHKIENQNSD) adopt a coiled-coil conformation. A disordered region spans residues 1258–1286 (GLPLSTLGSPRPSENPSAERKSHSSPKDS). Residues 1263–1273 (TLGSPRPSENP) are compositionally biased toward polar residues. Positions 1274–1283 (SAERKSHSSP) are enriched in basic and acidic residues. Residues 1488 to 1515 (VSDMAVQEELKSELQRKLMELRVYQKIL) are a coiled coil. 4 positions are modified to phosphoserine: Ser1732, Ser1754, Ser1770, and Ser1772. The segment at 1762-1799 (APGSALVRSPSPKERAFPQTQPPVEFVPPETPPARDQW) is disordered. The FYVE-type zinc finger occupies 1802 to 1862 (DETESVCMVC…VCDQCYSYYN (61 aa)). Zn(2+) is bound by residues Cys1808, Cys1811, Cys1825, Cys1828, Cys1833, Cys1836, Cys1854, and Cys1857. Positions 1865-1884 (TPEESPCQSEVPDSAKNESP) are disordered.

The protein belongs to the ZFYVE26 family. Interacts with AP5Z1, AP5B1, AP5S1 and SPG11. Interacts with TTC19 and KIF13A.

Its subcellular location is the cytoplasm. The protein resides in the cytoskeleton. It is found in the microtubule organizing center. It localises to the centrosome. The protein localises to the midbody. Its function is as follows. Phosphatidylinositol 3-phosphate-binding protein required for the abscission step in cytokinesis: recruited to the midbody during cytokinesis and acts as a regulator of abscission. May also be required for efficient homologous recombination DNA double-strand break repair. This Mus musculus (Mouse) protein is Zinc finger FYVE domain-containing protein 26 (Zfyve26).